The primary structure comprises 495 residues: Glycerol kinase (495 aa).

Position 12 (T12) interacts with ADP. 3 residues coordinate ATP: T12, T13, and S14. T12 is a sn-glycerol 3-phosphate binding site. R16 provides a ligand contact to ADP. The sn-glycerol 3-phosphate site is built by R82, E83, Y134, and D243. R82, E83, Y134, D243, and Q244 together coordinate glycerol. ADP is bound by residues T265 and G308. ATP is bound by residues T265, G308, Q312, and G409. Residues G409 and N413 each contribute to the ADP site.

This sequence belongs to the FGGY kinase family.

The enzyme catalyses glycerol + ATP = sn-glycerol 3-phosphate + ADP + H(+). Its pathway is polyol metabolism; glycerol degradation via glycerol kinase pathway; sn-glycerol 3-phosphate from glycerol: step 1/1. Its activity is regulated as follows. Inhibited by fructose 1,6-bisphosphate (FBP). Its function is as follows. Key enzyme in the regulation of glycerol uptake and metabolism. Catalyzes the phosphorylation of glycerol to yield sn-glycerol 3-phosphate. The polypeptide is Glycerol kinase (Ectopseudomonas mendocina (strain ymp) (Pseudomonas mendocina)).